A 533-amino-acid polypeptide reads, in one-letter code: NEDD8-activating enzyme E1 regulatory subunit (533 aa).

The segment at 330–343 (DMIADSDKFIKLQN) is interaction with uba3.

Belongs to the ubiquitin-activating E1 family. ULA1 subfamily. Heterodimer of uba3 and nae1. The complex binds nedd8 and ube2m.

Its pathway is protein modification; protein neddylation. Functionally, regulatory subunit of the dimeric uba3-nae1 E1 enzyme. E1 activates nedd8 by first adenylating its C-terminal glycine residue with ATP, thereafter linking this residue to the side chain of the catalytic cysteine, yielding a nedd8-uba3 thioester and free AMP. E1 finally transfers nedd8 to the catalytic cysteine of ube2m. The covalent attachment of nedd8 to target proteins is known as 'neddylation' and the process is involved in the regulation of cell growth, viability and development. The sequence is that of NEDD8-activating enzyme E1 regulatory subunit (nae1) from Danio rerio (Zebrafish).